The following is a 31-amino-acid chain: Cyclotide vinc-B (31 aa).

Positions 1–31 form a cross-link, cyclopeptide (Gly-Asn); that stretch reads GSIPACGESCFKGKCYTPGCTCSKYPLCAKN. Cystine bridges form between Cys6–Cys20, Cys10–Cys22, and Cys15–Cys28.

Belongs to the cyclotide family. This is a cyclic peptide.

Its function is as follows. Probably participates in a plant defense mechanism. This Viola inconspicua protein is Cyclotide vinc-B.